Reading from the N-terminus, the 105-residue chain is Small ribosomal subunit protein uS10 (105 aa).

This sequence belongs to the universal ribosomal protein uS10 family. As to quaternary structure, part of the 30S ribosomal subunit.

Functionally, involved in the binding of tRNA to the ribosomes. The protein is Small ribosomal subunit protein uS10 of Anaplasma phagocytophilum (strain HZ).